We begin with the raw amino-acid sequence, 231 residues long: Large ribosomal subunit protein uL1 (231 aa).

This sequence belongs to the universal ribosomal protein uL1 family. Part of the 50S ribosomal subunit.

In terms of biological role, binds directly to 23S rRNA. The L1 stalk is quite mobile in the ribosome, and is involved in E site tRNA release. Protein L1 is also a translational repressor protein, it controls the translation of the L11 operon by binding to its mRNA. The chain is Large ribosomal subunit protein uL1 from Pseudomonas savastanoi pv. phaseolicola (strain 1448A / Race 6) (Pseudomonas syringae pv. phaseolicola (strain 1448A / Race 6)).